A 307-amino-acid chain; its full sequence is Elongation factor Ts (307 aa).

Residues 80 to 83 (TDFV) form an involved in Mg(2+) ion dislocation from EF-Tu region.

Belongs to the EF-Ts family.

It is found in the cytoplasm. In terms of biological role, associates with the EF-Tu.GDP complex and induces the exchange of GDP to GTP. It remains bound to the aminoacyl-tRNA.EF-Tu.GTP complex up to the GTP hydrolysis stage on the ribosome. The chain is Elongation factor Ts from Clostridium botulinum (strain Loch Maree / Type A3).